The following is an 857-amino-acid chain: Autoinducer 2 sensor kinase/phosphatase LuxQ (857 aa).

A run of 2 helical transmembrane segments spans residues 14-34 (IASF…VSVL) and 283-303 (FWMA…RWWL). Residues 486-706 (KMSHELRTPL…RFEIQLPIEL (221 aa)) enclose the Histidine kinase domain. Residue His489 is modified to Phosphohistidine; by autocatalysis. In terms of domain architecture, Response regulatory spans 731 to 846 (RVLLVEDNHT…TLHKALEHFK (116 aa)). At Asp780 the chain carries 4-aspartylphosphate.

As to quaternary structure, binds the complex formed by AI-2 and LuxP.

Its subcellular location is the cell inner membrane. The enzyme catalyses ATP + protein L-histidine = ADP + protein N-phospho-L-histidine.. Functionally, at low cell density, in absence of AI-2 (autoinducer 2), LuxQ has a kinase activity and autophosphorylates on a histidine residue. The phosphoryl group is then transferred to an aspartate residue in the response regulator domain. The phosphoryl group is transferred to LuxU, and ultimately to LuxO. At high cell density, in the presence of AI-2, the kinase activity is inactivated, and the response regulator domain has a phosphatase activity. The protein is Autoinducer 2 sensor kinase/phosphatase LuxQ (luxQ) of Vibrio cholerae serotype O1 (strain ATCC 39315 / El Tor Inaba N16961).